We begin with the raw amino-acid sequence, 482 residues long: Aspartyl/glutamyl-tRNA(Asn/Gln) amidotransferase subunit B (482 aa).

The protein belongs to the GatB/GatE family. GatB subfamily. Heterotrimer of A, B and C subunits.

The enzyme catalyses L-glutamyl-tRNA(Gln) + L-glutamine + ATP + H2O = L-glutaminyl-tRNA(Gln) + L-glutamate + ADP + phosphate + H(+). It carries out the reaction L-aspartyl-tRNA(Asn) + L-glutamine + ATP + H2O = L-asparaginyl-tRNA(Asn) + L-glutamate + ADP + phosphate + 2 H(+). In terms of biological role, allows the formation of correctly charged Asn-tRNA(Asn) or Gln-tRNA(Gln) through the transamidation of misacylated Asp-tRNA(Asn) or Glu-tRNA(Gln) in organisms which lack either or both of asparaginyl-tRNA or glutaminyl-tRNA synthetases. The reaction takes place in the presence of glutamine and ATP through an activated phospho-Asp-tRNA(Asn) or phospho-Glu-tRNA(Gln). This chain is Aspartyl/glutamyl-tRNA(Asn/Gln) amidotransferase subunit B, found in Thermotoga petrophila (strain ATCC BAA-488 / DSM 13995 / JCM 10881 / RKU-1).